A 427-amino-acid chain; its full sequence is 3-phosphoshikimate 1-carboxyvinyltransferase (427 aa).

3-phosphoshikimate is bound by residues lysine 27, serine 28, and arginine 32. Lysine 27 provides a ligand contact to phosphoenolpyruvate. Positions 95 and 123 each coordinate phosphoenolpyruvate. The 3-phosphoshikimate site is built by serine 166, serine 167, glutamine 168, serine 192, aspartate 305, and lysine 332. Glutamine 168 contributes to the phosphoenolpyruvate binding site. The Proton acceptor role is filled by aspartate 305. Phosphoenolpyruvate contacts are provided by arginine 336 and arginine 377.

This sequence belongs to the EPSP synthase family. As to quaternary structure, monomer.

It localises to the cytoplasm. The enzyme catalyses 3-phosphoshikimate + phosphoenolpyruvate = 5-O-(1-carboxyvinyl)-3-phosphoshikimate + phosphate. Its pathway is metabolic intermediate biosynthesis; chorismate biosynthesis. Catalyzes the transfer of the enolpyruvyl moiety of phosphoenolpyruvate (PEP) to the 5-hydroxyl of shikimate-3-phosphate (S3P) to produce enolpyruvyl shikimate-3-phosphate and inorganic phosphate. This chain is 3-phosphoshikimate 1-carboxyvinyltransferase, found in Aeropyrum pernix (strain ATCC 700893 / DSM 11879 / JCM 9820 / NBRC 100138 / K1).